The sequence spans 305 residues: RNA-binding protein with serine-rich domain 1 (305 aa).

The span at 1–10 (MDLSGVKKKS) shows a compositional bias: basic residues. The necessary for interaction with SRP54, nuclear localization and exon-skipping stretch occupies residues 1 to 161 (MDLSGVKKKS…KRRSPSPKPT (161 aa)). Residues 1–170 (MDLSGVKKKS…TKVHIGRLTR (170 aa)) form a disordered region. Positions 1 to 220 (MDLSGVKKKS…ENPDEAEKAL (220 aa)) are necessary for interaction with the cleaved p110 isoform of CDC2L1. Residues K7 and K15 each participate in a glycyl lysine isopeptide (Lys-Gly) (interchain with G-Cter in SUMO2) cross-link. Basic and acidic residues predominate over residues 33–59 (DRSDEKSKDRSKDKGATKESSEKDRGR). S53 is subject to Phosphoserine. A compositionally biased stretch (low complexity) spans 68 to 126 (ASSGSSSTRSRSSSTSSSGSSTSTGSSSGSSSSSASSRSGSSSTSRSSSSSSSSGSPSP). Residues 69–121 (SSGSSSTRSRSSSTSSSGSSTSTGSSSGSSSSSASSRSGSSSTSRSSSSSSSS) form a necessary for interactions with UPF2 and UPF3B and UPF2-dependent NMD region. Composition is skewed to basic residues over residues 127–143 (SRRR…KSKP) and 151–167 (RKRR…HIGR). Residues S155 and S157 each carry the phosphoserine modification. Positions 156–242 (PSPKPTKVHI…ITATAVLAPW (87 aa)) are necessary for interaction with PNN and exon-skipping. An interaction with SAP18 and ACIN1 region spans residues 159-244 (KPTKVHIGRL…ATAVLAPWPR (86 aa)). A Phosphothreonine modification is found at T161. Residues 161–240 (TKVHIGRLTR…QEITATAVLA (80 aa)) form the RRM domain. K218 carries the post-translational modification N6-acetyllysine. The segment at 238 to 305 (VLAPWPRPPP…RSRSSSNSSR (68 aa)) is necessary for interaction with TRA2B, nuclear localization and exon-skipping. Residues 240–305 (APWPRPPPRR…RSRSSSNSSR (66 aa)) form a disordered region. The span at 242 to 261 (WPRPPPRRFSPPRRMLPPLP) shows a compositional bias: pro residues. A compositionally biased stretch (basic residues) spans 266–298 (SPPRMRRRSRSPRRRSPARRRSRSPGRRRHRSR).

The protein belongs to the splicing factor SR family. In terms of assembly, found in mRNA splicing-dependent exon junction complexes (EJC). Found in a post-splicing complex with NXF1, RBM8A, UPF1, UPF2, UPF3A, UPF3B and RNPS1. Component of the heterotrimeric ASAP (apoptosis- and splicing-associated protein) and PSAP complexes consisting of RNPS1, SAP18 and either ACIN1 or PNN, respectively; the ASAP and PSAP complexes probably are formed mutually exclusive. Component of the active spliceosome. Associates with polysomes. Interacts with the cleaved p110 isoform of CDC2L1, CSNK2A1, PNN, SART3, SRP54, SRRM1 and TRA2B/SFRS10. Post-translationally, phosphorylated on one or more of the four Ser/Thr residues (Ser-43, Thr-49, Ser-52 or Ser-53). Ser-53 phosphorylation site is important for splicing and translation stimulation activity in vitro.

It is found in the nucleus. Its subcellular location is the nucleus speckle. It localises to the cytoplasm. Part of pre- and post-splicing multiprotein mRNP complexes. Auxiliary component of the splicing-dependent multiprotein exon junction complex (EJC) deposited at splice junction on mRNAs. The EJC is a dynamic structure consisting of core proteins and several peripheral nuclear and cytoplasmic associated factors that join the complex only transiently either during EJC assembly or during subsequent mRNA metabolism. Component of the ASAP and PSAP complexes which bind RNA in a sequence-independent manner and are proposed to be recruited to the EJC prior to or during the splicing process and to regulate specific excision of introns in specific transcription subsets. The ASAP complex can inhibit RNA processing during in vitro splicing reactions. The ASAP complex promotes apoptosis and is disassembled after induction of apoptosis. Enhances the formation of the ATP-dependent A complex of the spliceosome. Involved in both constitutive splicing and, in association with SRP54 and TRA2B/SFRS10, in distinctive modulation of alternative splicing in a substrate-dependent manner. Involved in the splicing modulation of BCL2L1/Bcl-X (and probably other apoptotic genes); specifically inhibits formation of proapoptotic isoforms such as Bcl-X(S); the activity is different from the established EJC assembly and function. Participates in mRNA 3'-end cleavage. Involved in UPF2-dependent nonsense-mediated decay (NMD) of mRNAs containing premature stop codons. Also mediates increase of mRNA abundance and translational efficiency. Binds spliced mRNA 20-25 nt upstream of exon-exon junctions. This Bos taurus (Bovine) protein is RNA-binding protein with serine-rich domain 1 (RNPS1).